An 840-amino-acid polypeptide reads, in one-letter code: Heat shock 70 kDa protein 4 (840 aa).

An N6-acetyllysine modification is found at Lys-53. At Ser-76 the chain carries Phosphoserine. Phosphotyrosine is present on residues Tyr-89 and Tyr-336. Residues Ser-393 and Ser-415 each carry the phosphoserine modification. At Lys-430 the chain carries N6-acetyllysine. The interval 506 to 575 (NEEPMETDQN…QAKKAKVKTS (70 aa)) is disordered. Positions 514–533 (QNAKEEEKMQVDQEEPHAEE) are enriched in basic and acidic residues. At Thr-538 the chain carries Phosphothreonine. Phosphoserine occurs at positions 546 and 647. Tyr-660 is modified (phosphotyrosine). At Lys-679 the chain carries N6-acetyllysine. Residue Ser-756 is modified to Phosphoserine. The residue at position 773 (Lys-773) is an N6-methyllysine. The disordered stretch occupies residues 782 to 840 (IISKPKPKVEPPKEEQKNAEQNGPVDGQGDSPGPQAAEQGTDTAVPSDSDKKLPEMDID). Basic and acidic residues-rich tracts occupy residues 788-799 (PKVEPPKEEQKN) and 829-840 (DSDKKLPEMDID).

The protein belongs to the heat shock protein 70 family. Interacts with TJP1/ZO-1.

Its subcellular location is the cytoplasm. The polypeptide is Heat shock 70 kDa protein 4 (HSPA4) (Canis lupus familiaris (Dog)).